A 185-amino-acid polypeptide reads, in one-letter code: Ribosome-recycling factor (185 aa).

It belongs to the RRF family.

The protein resides in the cytoplasm. Functionally, responsible for the release of ribosomes from messenger RNA at the termination of protein biosynthesis. May increase the efficiency of translation by recycling ribosomes from one round of translation to another. The protein is Ribosome-recycling factor of Mycolicibacterium vanbaalenii (strain DSM 7251 / JCM 13017 / BCRC 16820 / KCTC 9966 / NRRL B-24157 / PYR-1) (Mycobacterium vanbaalenii).